A 92-amino-acid chain; its full sequence is uncharacterized protein (92 aa).

Residues 1–29 form the signal peptide; sequence MAAQTDYKKQVVGILLSLAFVLFVFSFSE.

This is an uncharacterized protein from Bacillus subtilis (strain 168).